Consider the following 885-residue polypeptide: Chitobiase (885 aa).

A signal peptide spans 1–27 (MNAFKLSALARLTATMGFLGGMGSAMA). 3 disulfides stabilise this stretch: cysteine 56/cysteine 66, cysteine 400/cysteine 408, and cysteine 505/cysteine 578. Glutamate 540 functions as the Proton donor in the catalytic mechanism. The disordered stretch occupies residues 866–885 (EVQVRSVSPDGKRYSRAEKV). Over residues 875-885 (DGKRYSRAEKV) the composition is skewed to basic and acidic residues.

Belongs to the glycosyl hydrolase 20 family. Monomer.

It localises to the periplasm. It catalyses the reaction Hydrolysis of terminal non-reducing N-acetyl-D-hexosamine residues in N-acetyl-beta-D-hexosaminides.. It participates in glycan degradation; chitin degradation. Its function is as follows. Digests the beta-1,4-glycosidic bonds in N-acetylglucosamine (GlcNAc) oligomers (mainly dimers). The chain is Chitobiase (chb) from Serratia marcescens.